The following is a 1507-amino-acid chain: Protein similar (1507 aa).

A disordered region spans residues 1 to 85; sequence MVSLIDTIEA…KSRDAARCRR (85 aa). The span at 26–49 shows a compositional bias: low complexity; sequence SASSSSCSSSFSSSPPSSSVGSPS. Residues 72–85 are compositionally biased toward basic and acidic residues; it reads KRKEKSRDAARCRR. Positions 72–125 constitute a bHLH domain; that stretch reads KRKEKSRDAARCRRSKETEIFMELSAALPLKTDDVNQLDKASVMRITIAFLKIR. 2 consecutive PAS domains span residues 167-240 and 307-377; these read NGAE…LAQK and PHPS…LSKG. A PAC domain is found at 381-422; that stretch reads TSRYRFLGKYGGYCWILSQATIVYDKLKPQSVVCVNYVISNL. Disordered regions lie at residues 433–459, 541–588, 706–832, and 900–951; these read QQTA…KAAD, HSPG…PPPT, TCST…CSPN, and YAGN…QAAV. Residues 439 to 459 are compositionally biased toward basic and acidic residues; the sequence is EQKEQHHQAAETEKEPEKAAD. Residues 548-559 show a composition bias toward polar residues; sequence ITAQLLSGSSSG. Residues 578–588 show a composition bias toward pro residues; that stretch reads SPAPPLTPPPT. Residues 692 to 863 are ODD; it reads TCLLPEDINS…IDDDMPLLTE (172 aa). Positions 706-717 are enriched in polar residues; it reads TCSTTASGQHYQ. Composition is skewed to low complexity over residues 718–745 and 754–777; these read SPSS…LSPL and SNPS…QQQH. Residues 803 to 818 show a composition bias toward polar residues; it reads DTSCSQHLHSPSITSK. Composition is skewed to low complexity over residues 823–832, 907–918, and 926–951; these read SSLPSLCSPN, QQQQQQPQLQQQ, and SSPA…QAAV. The stretch at 880–908 forms a coiled coil; the sequence is KEIDAIQQQLQQLQQQHHQQYAGNTGYQQ. Coiled-coil stretches lie at residues 982-1054 and 1110-1162; these read AEEC…YDVQ and QLLQ…QLQQ. Disordered regions lie at residues 1204–1228, 1251–1287, and 1356–1460; these read PQQQ…VESK, KDPA…QSNS, and FGGS…KTSI. Positions 1413–1423 are enriched in polar residues; sequence SSTSNSTNQAE.

As to quaternary structure, efficient DNA binding requires dimerization with another bHLH protein. Interacts with Vhl. In terms of tissue distribution, ubiquitously expressed in the embryo.

It localises to the cytoplasm. Its subcellular location is the nucleus. In terms of biological role, functions as a transcriptional regulator of the adaptive response to hypoxia. Binds to core DNA sequence 5'-[AG]CGTG-3' within the hypoxia response element (HRE) of target gene promoters. This Drosophila melanogaster (Fruit fly) protein is Protein similar (sima).